A 237-amino-acid chain; its full sequence is Protein PetR (237 aa).

Residues 8–121 form the Response regulatory domain; sequence HLLIVDDDER…ELLLRINAIL (114 aa). Asp-57 is modified (4-aspartylphosphate). Positions 77–95 form a DNA-binding region, H-T-H motif; that stretch reads ATPILLLTARGETRERIEG. Positions 132-236 form a DNA-binding region, ompR/PhoB-type; sequence PKYLSLGPLR…VRGLGYMLAP (105 aa).

Functionally, necessary for photosynthetic and respiratory growth. Probable promoter-specific protein mediating the interaction between DNA and RNA polymerase. The protein is Protein PetR (petR) of Rhodobacter capsulatus (strain ATCC BAA-309 / NBRC 16581 / SB1003).